Consider the following 75-residue polypeptide: Putative antitoxin VapB12 (75 aa).

Functionally, putative antitoxin component of a possible type II toxin-antitoxin (TA) system. The cognate toxin is VapC12. This Mycobacterium tuberculosis (strain CDC 1551 / Oshkosh) protein is Putative antitoxin VapB12 (vapB12).